The sequence spans 619 residues: Dihydroxy-acid dehydratase 1 (619 aa).

Asp81 contacts Mg(2+). Residue Cys122 participates in [2Fe-2S] cluster binding. Asp123 and Lys124 together coordinate Mg(2+). Position 124 is an N6-carboxylysine (Lys124). Cys198 contacts [2Fe-2S] cluster. Residue Glu494 coordinates Mg(2+). Ser520 (proton acceptor) is an active-site residue.

Belongs to the IlvD/Edd family. Homodimer. [2Fe-2S] cluster is required as a cofactor. Requires Mg(2+) as cofactor.

The catalysed reaction is (2R)-2,3-dihydroxy-3-methylbutanoate = 3-methyl-2-oxobutanoate + H2O. It catalyses the reaction (2R,3R)-2,3-dihydroxy-3-methylpentanoate = (S)-3-methyl-2-oxopentanoate + H2O. It functions in the pathway amino-acid biosynthesis; L-isoleucine biosynthesis; L-isoleucine from 2-oxobutanoate: step 3/4. The protein operates within amino-acid biosynthesis; L-valine biosynthesis; L-valine from pyruvate: step 3/4. Functionally, functions in the biosynthesis of branched-chain amino acids. Catalyzes the dehydration of (2R,3R)-2,3-dihydroxy-3-methylpentanoate (2,3-dihydroxy-3-methylvalerate) into 2-oxo-3-methylpentanoate (2-oxo-3-methylvalerate) and of (2R)-2,3-dihydroxy-3-methylbutanoate (2,3-dihydroxyisovalerate) into 2-oxo-3-methylbutanoate (2-oxoisovalerate), the penultimate precursor to L-isoleucine and L-valine, respectively. The polypeptide is Dihydroxy-acid dehydratase 1 (Bordetella bronchiseptica (strain ATCC BAA-588 / NCTC 13252 / RB50) (Alcaligenes bronchisepticus)).